We begin with the raw amino-acid sequence, 373 residues long: Nuclear hormone receptor family member nhr-69 (373 aa).

Positions 3–78 (EEICHICNDK…AGMKSNAIQN (76 aa)) form a DNA-binding region, nuclear receptor. 2 NR C4-type zinc fingers span residues 6–26 (CHICNDKSTGKHYGAISCDGC) and 42–66 (CRFEQNCDVTKNKRNACRACRLQKC). One can recognise an NR LBD domain in the interval 93 to 344 (EKEDLIDQLV…SLMEELILND (252 aa)).

It belongs to the nuclear hormone receptor family. As to quaternary structure, interacts with R-SMAD daf-8. As to expression, expressed in the ASI neurons, hypodermis, and in tail neurons.

The protein resides in the nucleus. Its function is as follows. Orphan nuclear receptor which, in cooperation with R-SMAD daf-8, modulates the Insulin/IGF-1-like signaling (IIS) pathway, perhaps by regulating expression of the potassium channel exp-2, which in turn modulates the secretion of insulin-like peptide daf-28. The sequence is that of Nuclear hormone receptor family member nhr-69 (nhr-69) from Caenorhabditis elegans.